Consider the following 437-residue polypeptide: tRNA pseudouridine synthase Pus10 (437 aa).

In terms of domain architecture, THUMP spans V76–S198. The Nucleophile role is filled by D253. Substrate is bound by residues Y321 and Y394.

This sequence belongs to the pseudouridine synthase Pus10 family.

The catalysed reaction is uridine(54) in tRNA = pseudouridine(54) in tRNA. The enzyme catalyses uridine(55) in tRNA = pseudouridine(55) in tRNA. Its function is as follows. Responsible for synthesis of pseudouridine from uracil-54 and uracil-55 in the psi GC loop of transfer RNAs. The sequence is that of tRNA pseudouridine synthase Pus10 from Aeropyrum pernix (strain ATCC 700893 / DSM 11879 / JCM 9820 / NBRC 100138 / K1).